The sequence spans 403 residues: S-adenosylmethionine synthase (403 aa).

ATP is bound at residue His16. Asp18 provides a ligand contact to Mg(2+). A K(+)-binding site is contributed by Glu44. L-methionine-binding residues include Glu57 and Gln110. Residues Gln110 to Ala120 are flexible loop. Residues Asp175–Lys177, Asp253, Arg259–Lys260, Ala276, and Lys280 contribute to the ATP site. Asp253 provides a ligand contact to L-methionine. Lys284 is an L-methionine binding site.

The protein belongs to the AdoMet synthase family. In terms of assembly, homotetramer; dimer of dimers. It depends on Mg(2+) as a cofactor. K(+) is required as a cofactor.

It localises to the cytoplasm. It catalyses the reaction L-methionine + ATP + H2O = S-adenosyl-L-methionine + phosphate + diphosphate. The protein operates within amino-acid biosynthesis; S-adenosyl-L-methionine biosynthesis; S-adenosyl-L-methionine from L-methionine: step 1/1. Catalyzes the formation of S-adenosylmethionine (AdoMet) from methionine and ATP. The overall synthetic reaction is composed of two sequential steps, AdoMet formation and the subsequent tripolyphosphate hydrolysis which occurs prior to release of AdoMet from the enzyme. The chain is S-adenosylmethionine synthase from Erythrobacter litoralis (strain HTCC2594).